Reading from the N-terminus, the 152-residue chain is UPF0225 protein YchJ (152 aa).

Belongs to the UPF0225 family.

This Shigella dysenteriae serotype 1 (strain Sd197) protein is UPF0225 protein YchJ.